A 293-amino-acid polypeptide reads, in one-letter code: Elongation factor Ts (293 aa).

The interval 80-83 (TDFV) is involved in Mg(2+) ion dislocation from EF-Tu.

The protein belongs to the EF-Ts family.

Its subcellular location is the cytoplasm. Its function is as follows. Associates with the EF-Tu.GDP complex and induces the exchange of GDP to GTP. It remains bound to the aminoacyl-tRNA.EF-Tu.GTP complex up to the GTP hydrolysis stage on the ribosome. This is Elongation factor Ts from Lacticaseibacillus casei (strain BL23) (Lactobacillus casei).